The chain runs to 266 residues: Protein crossbronx-like (266 aa).

Positions 15–178 (KQGYHILAEY…VQEQAIASRN (164 aa)) constitute a UBC core domain.

It belongs to the ubiquitin-conjugating enzyme family. FTS subfamily.

This chain is Protein crossbronx-like, found in Drosophila erecta (Fruit fly).